The following is a 165-amino-acid chain: Large ribosomal subunit protein uL10 (165 aa).

Belongs to the universal ribosomal protein uL10 family. In terms of assembly, part of the ribosomal stalk of the 50S ribosomal subunit. The N-terminus interacts with L11 and the large rRNA to form the base of the stalk. The C-terminus forms an elongated spine to which L12 dimers bind in a sequential fashion forming a multimeric L10(L12)X complex.

Functionally, forms part of the ribosomal stalk, playing a central role in the interaction of the ribosome with GTP-bound translation factors. This is Large ribosomal subunit protein uL10 from Shewanella piezotolerans (strain WP3 / JCM 13877).